The following is a 95-amino-acid chain: Putative pterin-4-alpha-carbinolamine dehydratase (95 aa).

The protein belongs to the pterin-4-alpha-carbinolamine dehydratase family.

It carries out the reaction (4aS,6R)-4a-hydroxy-L-erythro-5,6,7,8-tetrahydrobiopterin = (6R)-L-erythro-6,7-dihydrobiopterin + H2O. This chain is Putative pterin-4-alpha-carbinolamine dehydratase, found in Prochlorococcus marinus (strain NATL2A).